The primary structure comprises 616 residues: Dihydroxy-acid dehydratase (616 aa).

Asp81 is a binding site for Mg(2+). Cys122 is a binding site for [2Fe-2S] cluster. Residues Asp123 and Lys124 each contribute to the Mg(2+) site. Lys124 carries the N6-carboxylysine modification. Residue Cys195 coordinates [2Fe-2S] cluster. Glu491 lines the Mg(2+) pocket. Catalysis depends on Ser517, which acts as the Proton acceptor.

This sequence belongs to the IlvD/Edd family. Homodimer. The cofactor is [2Fe-2S] cluster. Mg(2+) is required as a cofactor.

It catalyses the reaction (2R)-2,3-dihydroxy-3-methylbutanoate = 3-methyl-2-oxobutanoate + H2O. The catalysed reaction is (2R,3R)-2,3-dihydroxy-3-methylpentanoate = (S)-3-methyl-2-oxopentanoate + H2O. The protein operates within amino-acid biosynthesis; L-isoleucine biosynthesis; L-isoleucine from 2-oxobutanoate: step 3/4. It participates in amino-acid biosynthesis; L-valine biosynthesis; L-valine from pyruvate: step 3/4. Its function is as follows. Functions in the biosynthesis of branched-chain amino acids. Catalyzes the dehydration of (2R,3R)-2,3-dihydroxy-3-methylpentanoate (2,3-dihydroxy-3-methylvalerate) into 2-oxo-3-methylpentanoate (2-oxo-3-methylvalerate) and of (2R)-2,3-dihydroxy-3-methylbutanoate (2,3-dihydroxyisovalerate) into 2-oxo-3-methylbutanoate (2-oxoisovalerate), the penultimate precursor to L-isoleucine and L-valine, respectively. The protein is Dihydroxy-acid dehydratase of Shigella sonnei (strain Ss046).